Consider the following 303-residue polypeptide: 5-dehydro-4-deoxyglucarate dehydratase (303 aa).

The protein belongs to the DapA family.

The enzyme catalyses 5-dehydro-4-deoxy-D-glucarate + H(+) = 2,5-dioxopentanoate + CO2 + H2O. The protein operates within carbohydrate acid metabolism; D-glucarate degradation; 2,5-dioxopentanoate from D-glucarate: step 2/2. In Pseudomonas putida (Arthrobacter siderocapsulatus), this protein is 5-dehydro-4-deoxyglucarate dehydratase.